The following is a 182-amino-acid chain: ATP synthase subunit delta, organellar chromatophore (182 aa).

Belongs to the ATPase delta chain family. As to quaternary structure, F-type ATPases have 2 components, F(1) - the catalytic core - and F(0) - the membrane proton channel. F(1) has five subunits: alpha(3), beta(3), gamma(1), delta(1), epsilon(1). CF(0) has four main subunits: a(1), b(1), b'(1) and c(10-14). The alpha and beta chains form an alternating ring which encloses part of the gamma chain. F(1) is attached to F(0) by a central stalk formed by the gamma and epsilon chains, while a peripheral stalk is formed by the delta, b and b' chains.

It is found in the plastid. The protein localises to the organellar chromatophore thylakoid membrane. Functionally, f(1)F(0) ATP synthase produces ATP from ADP in the presence of a proton or sodium gradient. F-type ATPases consist of two structural domains, F(1) containing the extramembraneous catalytic core and F(0) containing the membrane proton channel, linked together by a central stalk and a peripheral stalk. During catalysis, ATP synthesis in the catalytic domain of F(1) is coupled via a rotary mechanism of the central stalk subunits to proton translocation. Its function is as follows. This protein is part of the stalk that links CF(0) to CF(1). It either transmits conformational changes from CF(0) to CF(1) or is implicated in proton conduction. In Paulinella chromatophora, this protein is ATP synthase subunit delta, organellar chromatophore.